The sequence spans 248 residues: Aquaporin TIP2-3 (248 aa).

The next 2 membrane-spanning stretches (helical) occupy residues 20–40 (AYVAEFIATLLFVFAGVGSAI) and 54–74 (AGLVAIAIAHAFALFVGVSMA). The NPA 1 signature appears at 83–85 (NPA). Helical transmembrane passes span 97–119 (TILTGILYWVAQLLGASVACFLL), 141–161 (GVVMEIVITFALVYTVYATAA), and 168–188 (LGTIAPMAIGFIVGANILAAG). An NPA 2 motif is present at residues 196 to 198 (NPA). The chain crosses the membrane as a helical span at residues 217–237 (WVGPLVGGGLAGLVYGDVFIA).

This sequence belongs to the MIP/aquaporin (TC 1.A.8) family. TIP (TC 1.A.8.10) subfamily. As to expression, specifically expressed in roots.

Its subcellular location is the cell membrane. Its function is as follows. Water channel required to facilitate the transport of water across cell membrane. This is Aquaporin TIP2-3 (TIP2-3) from Zea mays (Maize).